A 448-amino-acid chain; its full sequence is MKSCEVNFDGLVGPTHNYGGLSYGNVASQSNSQQSANPREAALQGLAKMKALMDLGFTQGVLAPQERPDVSGLRRLGFTGSDEQVIEKAARQDMPLLVASCSASSMWVANAATVSPSADTADGRVHFTAANLNCKYHRSIEHPTTTRVLGAMFADAKHFAHHPALPAVAQFGDEGAANHTRFCRDYGEAGVEFFVFGRSAFDTRYPAPQKYPARQTLEASRAVARLHGLSEAGVVYSQQNPAVIDQGVFHNDVIAVGNGEVLFYHQDAFLNTDPMLNELRDKLGRVGGQLRAICVPRAEVSVQDAVRSYLFNSQLLSRPDGSMLLIVPQECQANASVWAYLQRLIADDSPVAEVKVFDLKQSMQNGGGPACLRLRVALNDTELAAVNPGVIMTAPLYETLTQWVDRHYRDRMSESDLADPRLLSECRTALDELTQILKLGAVYPFQLN.

Residues 19–28 (GGLSYGNVAS), N110, and 137–138 (HR) each bind substrate. E174 is a catalytic residue. R214 contacts substrate. The active site involves H250. Residues D252 and N365 each contribute to the substrate site. The active-site Nucleophile is the C371.

The protein belongs to the succinylarginine dihydrolase family. As to quaternary structure, homodimer.

It catalyses the reaction N(2)-succinyl-L-arginine + 2 H2O + 2 H(+) = N(2)-succinyl-L-ornithine + 2 NH4(+) + CO2. The protein operates within amino-acid degradation; L-arginine degradation via AST pathway; L-glutamate and succinate from L-arginine: step 2/5. Catalyzes the hydrolysis of N(2)-succinylarginine into N(2)-succinylornithine, ammonia and CO(2). The polypeptide is N-succinylarginine dihydrolase (Pseudomonas syringae pv. syringae (strain B728a)).